Reading from the N-terminus, the 210-residue chain is UPF0173 protein PF0020 (210 aa).

This sequence belongs to the UPF0173 family.

The chain is UPF0173 protein PF0020 from Pyrococcus furiosus (strain ATCC 43587 / DSM 3638 / JCM 8422 / Vc1).